Reading from the N-terminus, the 520-residue chain is Zinc finger and BTB domain-containing protein 45 (520 aa).

A BTB domain is found at 33 to 96 (CDVTVRIREA…LYSGSLVVAQ (64 aa)). Disordered stretches follow at residues 182–272 (PAPP…GGAG) and 337–372 (FHLGAPGPPAPTPPTPSGPAPAPPPTFYPTLQPDAA). The segment covering 206 to 225 (RGEEDDDEETDEETDAEEGE) has biased composition (acidic residues). Residues 342-363 (PGPPAPTPPTPSGPAPAPPPTF) show a composition bias toward pro residues. 4 consecutive C2H2-type zinc fingers follow at residues 412 to 434 (YECSHCRKTFSSRKNYTKHMFIH), 440 to 462 (HQCAVCWRSFSLRDYLLKHMVTH), 468 to 490 (FQCAVCAKRFTQKSSLNVHMRTH), and 495 to 517 (APCPACGKVFSHRALLERHLAAH).

It belongs to the krueppel C2H2-type zinc-finger protein family.

The protein localises to the nucleus. May be involved in transcriptional regulation. In the central nervous system, may play a role in glial cell differentiation. The protein is Zinc finger and BTB domain-containing protein 45 of Mus musculus (Mouse).